The following is a 545-amino-acid chain: O-phosphoserine--tRNA(Cys) ligase (545 aa).

Substrate contacts are provided by residues 189–191 (HMT), 234–236 (SAS), 276–277 (YY), and N328.

It belongs to the class-II aminoacyl-tRNA synthetase family. O-phosphoseryl-tRNA(Cys) synthetase subfamily. In terms of assembly, homotetramer. Interacts with SepCysS.

It carries out the reaction tRNA(Cys) + O-phospho-L-serine + ATP = O-phospho-L-seryl-tRNA(Cys) + AMP + diphosphate. Functionally, catalyzes the attachment of O-phosphoserine (Sep) to tRNA(Cys). The sequence is that of O-phosphoserine--tRNA(Cys) ligase from Methanothrix thermoacetophila (strain DSM 6194 / JCM 14653 / NBRC 101360 / PT) (Methanosaeta thermophila).